Here is a 613-residue protein sequence, read N- to C-terminus: UvrABC system protein C (613 aa).

The region spanning 20-98 (ERPGVYLMYD…IKRHKPRYNI (79 aa)) is the GIY-YIG domain. The UVR domain maps to 209-244 (FDVIESLGHKMQQASDEFEFEKAALYRDKISALRAI).

It belongs to the UvrC family. In terms of assembly, interacts with UvrB in an incision complex.

Its subcellular location is the cytoplasm. Functionally, the UvrABC repair system catalyzes the recognition and processing of DNA lesions. UvrC both incises the 5' and 3' sides of the lesion. The N-terminal half is responsible for the 3' incision and the C-terminal half is responsible for the 5' incision. The polypeptide is UvrABC system protein C (Hydrogenovibrio crunogenus (strain DSM 25203 / XCL-2) (Thiomicrospira crunogena)).